The chain runs to 194 residues: Small ribosomal subunit protein eS7 (194 aa).

The protein belongs to the eukaryotic ribosomal protein eS7 family.

This Drosophila melanogaster (Fruit fly) protein is Small ribosomal subunit protein eS7 (RpS7).